Reading from the N-terminus, the 209-residue chain is Large ribosomal subunit protein uL3 (209 aa).

Glutamine 150 carries the post-translational modification N5-methylglutamine.

It belongs to the universal ribosomal protein uL3 family. In terms of assembly, part of the 50S ribosomal subunit. Forms a cluster with proteins L14 and L19. In terms of processing, methylated by PrmB.

Its function is as follows. One of the primary rRNA binding proteins, it binds directly near the 3'-end of the 23S rRNA, where it nucleates assembly of the 50S subunit. This is Large ribosomal subunit protein uL3 from Escherichia coli O139:H28 (strain E24377A / ETEC).